The primary structure comprises 425 residues: Trigger factor (425 aa).

Positions Gly163 to Pro248 constitute a PPIase FKBP-type domain.

This sequence belongs to the FKBP-type PPIase family. Tig subfamily.

It is found in the cytoplasm. The enzyme catalyses [protein]-peptidylproline (omega=180) = [protein]-peptidylproline (omega=0). Functionally, involved in protein export. Acts as a chaperone by maintaining the newly synthesized protein in an open conformation. Functions as a peptidyl-prolyl cis-trans isomerase. This Bacillus cereus (strain ATCC 10987 / NRS 248) protein is Trigger factor.